Consider the following 175-residue polypeptide: uncharacterized protein (175 aa).

The N-terminal stretch at 1–22 (MNRIVGILISILMLACIGVTMA) is a signal peptide.

This is an uncharacterized protein from Archaeoglobus fulgidus (strain ATCC 49558 / DSM 4304 / JCM 9628 / NBRC 100126 / VC-16).